A 439-amino-acid polypeptide reads, in one-letter code: MTLTHTQLAEHGYMSGFANEFATEALPGALPVGRNSPQCAPYGLYAEQLSGTAFTAPRAHNRRSWLYRIRPAAMHTPFTQIEQSRFLSRFDQVPPSPNQMRWSPPAMPSVPTDFVDGIVTMAGNGGPEAMTGCGIHLYLANQSMQDRFFYNADGEMLIVPQQGRLLMVTELGRLEVEPQEIVVIPRGVRFRVELPDGEARGYICENYGALFQLPDLGVIGSNGLANPRDFLSPVASYEDREGDFELVAKFQGNLWRAGIGHSPLDVVAWHGNYTPYKYDLRRFNTIGSISFDHPDPSIFLVLQSPSATPGVDTIDFVIFGPRWLAMQDSFRPPWFHRNIASEFMGLITGVYDAKAEGFAPGGASLHNCMSGHGPDAETFEKASAADTSKPHRIEDTMAFMFETPGVIRPTPYAAQSASLQQDYYTCWQGLKKHFNPNTR.

Residue histidine 293 is the Proton acceptor of the active site. Residues histidine 336 and glutamate 342 each coordinate Fe cation. Tyrosine 351 and histidine 372 together coordinate homogentisate. Histidine 372 lines the Fe cation pocket.

It belongs to the homogentisate dioxygenase family. As to quaternary structure, hexamer; dimer of trimers. Fe cation serves as cofactor.

It carries out the reaction homogentisate + O2 = 4-maleylacetoacetate + H(+). It functions in the pathway amino-acid degradation; L-phenylalanine degradation; acetoacetate and fumarate from L-phenylalanine: step 4/6. Involved in the catabolism of homogentisate (2,5-dihydroxyphenylacetate or 2,5-OH-PhAc), a central intermediate in the degradation of phenylalanine and tyrosine. Catalyzes the oxidative ring cleavage of the aromatic ring of homogentisate to yield maleylacetoacetate. The protein is Homogentisate 1,2-dioxygenase of Cupriavidus necator (strain ATCC 17699 / DSM 428 / KCTC 22496 / NCIMB 10442 / H16 / Stanier 337) (Ralstonia eutropha).